The following is a 700-amino-acid chain: Calpain-2 catalytic subunit (700 aa).

Residue A2 is modified to N-acetylalanine. Positions 2 to 19 are cleaved as a propeptide — anchors to the small subunit; it reads AGIAIKLAKDREAAEGLG. The Calpain catalytic domain occupies 45-344; sequence LFQDPSFPAL…YSRLEICNLT (300 aa). Ca(2+)-binding residues include I89, G91, and D96. C105 is a catalytic residue. E175, Q229, and K230 together coordinate Ca(2+). Active-site residues include H262 and N286. Positions 292, 299, 319, and 323 each coordinate Ca(2+). The tract at residues 345-514 is domain III; that stretch reads PDTLTCDSYK…KKADYQAVDD (170 aa). The segment at 515–529 is linker; that stretch reads EIEANIEEIDANEED. A domain IV region spans residues 530–700; the sequence is IDDGFRRLFV…LASWLSFSVL (171 aa). The Ca(2+) site is built by A542, D545, E547, E552, D585, D587, S589, K591, E596, D615, D617, S619, T621, E626, D658, and N661. EF-hand domains are found at residues 572-605 and 602-637; these read FSIETCKIMVDMLDEDGSGKLGLKEFYILWTKIQ and TKIQKYQKIYREIDVDRSGTMNSYEMRKALEEAGFK.

This sequence belongs to the peptidase C2 family. In terms of assembly, forms a heterodimer with a small (regulatory) subunit (CAPNS1). Interacts with CPEB3; this leads to cleavage of CPEB3. Ca(2+) serves as cofactor. In terms of tissue distribution, ubiquitous.

It localises to the cytoplasm. The protein localises to the cell membrane. The catalysed reaction is Broad endopeptidase specificity.. Activated by 200-1000 micromolar concentrations of calcium and inhibited by calpastatin. Calcium-regulated non-lysosomal thiol-protease which catalyzes limited proteolysis of substrates involved in cytoskeletal remodeling and signal transduction. Proteolytically cleaves MYOC at 'Arg-226'. Proteolytically cleaves CPEB3 following neuronal stimulation which abolishes CPEB3 translational repressor activity, leading to translation of CPEB3 target mRNAs. This is Calpain-2 catalytic subunit (Capn2) from Mus musculus (Mouse).